Here is a 698-residue protein sequence, read N- to C-terminus: Polyribonucleotide nucleotidyltransferase (698 aa).

The Mg(2+) site is built by D490 and D496. Residues 558-617 form the KH domain; the sequence is PVIYTMRIPQDKIGALIGPGGKNIKRITETTDTKIDINDDGVVQIAAVNGDKLAMAKAEI. Positions 627 to 695 constitute an S1 motif domain; the sequence is NKIYKGKVVS…NNGKVRLSRK (69 aa).

The protein belongs to the polyribonucleotide nucleotidyltransferase family. Mg(2+) serves as cofactor.

The protein localises to the cytoplasm. The enzyme catalyses RNA(n+1) + phosphate = RNA(n) + a ribonucleoside 5'-diphosphate. Involved in mRNA degradation. Catalyzes the phosphorolysis of single-stranded polyribonucleotides processively in the 3'- to 5'-direction. The sequence is that of Polyribonucleotide nucleotidyltransferase from Elusimicrobium minutum (strain Pei191).